The primary structure comprises 530 residues: Calcium uptake protein 3, mitochondrial (530 aa).

The transit peptide at 1–43 (MAALRRLLWPPPRVSPPLCAHQPLLGPWGRPAVTTLGLPGRPF) directs the protein to the mitochondrion. Residues 92 to 115 (GSPATGRPSKSAATEPEDPPRGRG) form a disordered region. One can recognise an EF-hand 1 domain in the interval 232 to 267 (KPHAGFRIAFNMFDTDGNEMVDKKEFLVLQEIFRKK). Ca(2+)-binding residues include D245, D247, N249, M251, D253, and E256. Positions 401–436 (VENTSVFLENVRYSIPEEKGITFDEFRSFFQFLNNL) constitute an EF-hand 2; degenerate domain. The region spanning 470 to 505 (FSPHLVNTVFKIFDVDKDDQLSYKEFIGIMKDRLHR) is the EF-hand 3 domain. Ca(2+)-binding residues include D483, D485, D487, Q489, and E494.

Belongs to the MICU1 family. MICU3 subfamily. Heterodimer; disulfide-linked; heterodimerizes with MICU1. Component of the uniplex complex, composed of MCU, EMRE/SMDT1, MICU1 and MICU3 in a 4:4:1:1 stoichiometry. As to expression, specifically expressed in the central nervous system and skeletal muscle.

It is found in the mitochondrion intermembrane space. The protein resides in the mitochondrion inner membrane. In terms of biological role, tissue-specific calcium sensor of the mitochondrial calcium uniporter (MCU) channel, which specifically regulates MCU channel activity in the central nervous system and skeletal muscle. Senses calcium level via its EF-hand domains: compared to MICU1 and MICU2, MICU3 has a higher affinity for calcium. MICU1 and MICU3 form a disulfide-linked heterodimer that stimulates and inhibits MCU activity, depending on the concentration of calcium. At low calcium levels, MICU1 occludes the pore of the MCU channel, preventing mitochondrial calcium uptake. At higher calcium levels, calcium-binding to MICU1 and MICU3 induces a conformational change that weakens MCU-MICU1 interactions and moves the MICU1-MICU3 heterodimer away from the pore, allowing calcium permeation through the MCU channel. The high calcium affinity of MICU3 lowers the calcium threshold necessary for calcium permeation through the MCU channel. The MICU1-MICU3 heterodimer promotes flexibility of neurotransmission in neuronal cells by enhancing mitochondrial calcium uptake in presynapses. It is also required to increase mitochondrial calcium uptake in skeletal muscle cells, thereby increasing ATP production. The sequence is that of Calcium uptake protein 3, mitochondrial from Homo sapiens (Human).